Reading from the N-terminus, the 471-residue chain is T-box transcription factor T (471 aa).

Residues 24 to 196 constitute a DNA-binding region (T-box); the sequence is LWTKFCSLTN…HNPFAKAFLD (173 aa).

In terms of tissue distribution, developing notochord.

The protein resides in the nucleus. Functionally, involved in the transcriptional regulation of genes required for mesoderm differentiation. The polypeptide is T-box transcription factor T (Halocynthia roretzi (Sea squirt)).